We begin with the raw amino-acid sequence, 428 residues long: MTWFIDRRLNGKNKSTVNRQRFLRRYKAQIKQSISEAINKRSVTDVDSGESVSIPTDDISEPMFHQGRGGLRHRVHPGNDHFIQNDRIERPQSGGGGGSGSGQGQASQDGEGQDEFVFQISKDEYLDLLFEDLALPNLKKNQHRQLNEYKTHRAGFTSNGVPANISVVRSLQNSLARRTAMTAGKRRELHALETELETISHSEPAQLLEEERLRREIAELRAKIERVPFIDTFDLRYKNYEKRPEPSSQAVMFCLMDVSGSMDQATKDMAKRFYILLYLFLSRTYKNVEVVYIRHHTQAKEVDEHEFFYSQETGGTIVSSALKLMDEVVKERYDPSQWNIYAAQASDGDNWADDSPLCHEILAKKLLPVVRYYSYIEITRRAHQTLWREYEHLQATFDNFAMQHIRDQEDIYPVFRELFQKQSANQSA.

Residues 77-90 (PGNDHFIQNDRIER) show a composition bias toward basic and acidic residues. A disordered region spans residues 77–111 (PGNDHFIQNDRIERPQSGGGGGSGSGQGQASQDGE). The span at 93-103 (SGGGGGSGSGQ) shows a compositional bias: gly residues.

It belongs to the UPF0229 family.

The polypeptide is UPF0229 protein YeaH (Salmonella typhi).